The following is a 607-amino-acid chain: T-box transcription factor TBX18 (607 aa).

An Engrailed homology 1 repressor motif is present at residues 18–28; the sequence is HAFSVEALIGA. Positions 30–141 are disordered; that stretch reads KQQQLQKKRR…PLPSPQAPRV (112 aa). Residues 36–40 carry the Nuclear localization signal motif; the sequence is KKRRK. Positions 44–53 are enriched in low complexity; it reads EEAAGAVDDG. The segment at residues 143–330 is a DNA-binding region (T-box); the sequence is LQGAELWKRF…RNPFAKGFRD (188 aa).

As to quaternary structure, homodimer. Can form a heterodimer with TBX15. Interacts with GATA4 and NKX2-5. Interacts with PAX3. Interacts (via engrailed homology 1 repressor motif) with TLE3; this interaction represses TBX18 transcriptional activity. Interacts with SIX1.

It is found in the nucleus. Functionally, acts as a transcriptional repressor involved in developmental processes of a variety of tissues and organs, including the heart and coronary vessels, the ureter and the vertebral column. Required for embryonic development of the sino atrial node (SAN) head area. The protein is T-box transcription factor TBX18 (TBX18) of Homo sapiens (Human).